The following is an 85-amino-acid chain: Sec-independent protein translocase protein TatA (85 aa).

A helical transmembrane segment spans residues 1 to 21 (MGSFSIWHWLIVLVIIMMVFG). A compositionally biased stretch (basic and acidic residues) spans 39–51 (FKDGMREGQEDKP). A disordered region spans residues 39–85 (FKDGMREGQEDKPAGSQQPQQTAGQPPRELHDATTIDVEARDKSKQG). The span at 53 to 62 (GSQQPQQTAG) shows a compositional bias: polar residues. Residues 66 to 85 (RELHDATTIDVEARDKSKQG) show a composition bias toward basic and acidic residues.

It belongs to the TatA/E family. As to quaternary structure, the Tat system comprises two distinct complexes: a TatABC complex, containing multiple copies of TatA, TatB and TatC subunits, and a separate TatA complex, containing only TatA subunits. Substrates initially bind to the TatABC complex, which probably triggers association of the separate TatA complex to form the active translocon.

The protein resides in the cell inner membrane. Part of the twin-arginine translocation (Tat) system that transports large folded proteins containing a characteristic twin-arginine motif in their signal peptide across membranes. TatA could form the protein-conducting channel of the Tat system. This is Sec-independent protein translocase protein TatA from Ralstonia pickettii (strain 12J).